A 102-amino-acid polypeptide reads, in one-letter code: Vacuolar ATPase assembly integral membrane protein VMA21 homolog (102 aa).

Over Met1 to Thr33 the chain is Cytoplasmic. A helical membrane pass occupies residues Tyr34–Phe54. Topologically, residues Glu55 to Thr67 are lumenal. The helical transmembrane segment at Tyr68–Ala88 threads the bilayer. The Cytoplasmic portion of the chain corresponds to Thr89 to Asp102.

It belongs to the VMA21 family.

The protein localises to the endoplasmic reticulum membrane. It localises to the endoplasmic reticulum-Golgi intermediate compartment membrane. It is found in the cytoplasmic vesicle. Its subcellular location is the COPII-coated vesicle membrane. Functionally, required for the assembly of the V0 complex of the vacuolar ATPase (V-ATPase) in the endoplasmic reticulum. The chain is Vacuolar ATPase assembly integral membrane protein VMA21 homolog from Caenorhabditis elegans.